The sequence spans 567 residues: Proline--tRNA ligase (567 aa).

This sequence belongs to the class-II aminoacyl-tRNA synthetase family. ProS type 1 subfamily. In terms of assembly, homodimer.

It is found in the cytoplasm. The catalysed reaction is tRNA(Pro) + L-proline + ATP = L-prolyl-tRNA(Pro) + AMP + diphosphate. Its function is as follows. Catalyzes the attachment of proline to tRNA(Pro) in a two-step reaction: proline is first activated by ATP to form Pro-AMP and then transferred to the acceptor end of tRNA(Pro). As ProRS can inadvertently accommodate and process non-cognate amino acids such as alanine and cysteine, to avoid such errors it has two additional distinct editing activities against alanine. One activity is designated as 'pretransfer' editing and involves the tRNA(Pro)-independent hydrolysis of activated Ala-AMP. The other activity is designated 'posttransfer' editing and involves deacylation of mischarged Ala-tRNA(Pro). The misacylated Cys-tRNA(Pro) is not edited by ProRS. This is Proline--tRNA ligase from Staphylococcus aureus (strain Mu3 / ATCC 700698).